The following is a 718-amino-acid chain: Polyribonucleotide nucleotidyltransferase (718 aa).

Residues Asp493 and Asp499 each coordinate Mg(2+). Residues 560–619 form the KH domain; sequence PRVIKKQIDPDKIRNVIGPGGKMINKIIDETGVKIDIEPDGLIYISSSDAEQAEQAIKAI. The region spanning 629 to 697 is the S1 motif domain; it reads GEVYLGKVVR…ERGRINLSRK (69 aa). Positions 695 to 718 are disordered; it reads SRKQALGEEDGKTNNDDKKSTKKT. Positions 699-718 are enriched in basic and acidic residues; sequence ALGEEDGKTNNDDKKSTKKT.

Belongs to the polyribonucleotide nucleotidyltransferase family. Requires Mg(2+) as cofactor.

It is found in the cytoplasm. It carries out the reaction RNA(n+1) + phosphate = RNA(n) + a ribonucleoside 5'-diphosphate. Its function is as follows. Involved in mRNA degradation. Catalyzes the phosphorolysis of single-stranded polyribonucleotides processively in the 3'- to 5'-direction. This chain is Polyribonucleotide nucleotidyltransferase, found in Natranaerobius thermophilus (strain ATCC BAA-1301 / DSM 18059 / JW/NM-WN-LF).